A 266-amino-acid polypeptide reads, in one-letter code: ATP synthase subunit a (266 aa).

6 helical membrane-spanning segments follow: residues 38 to 58 (KQML…LLAA), 99 to 119 (LLFS…IPLI), 126 to 146 (HVGG…AIGV), 162 to 182 (GVPV…NFLV), 191 to 211 (LFAT…GIEY), and 224 to 244 (SVLV…IMAL).

The protein belongs to the ATPase A chain family. F-type ATPases have 2 components, CF(1) - the catalytic core - and CF(0) - the membrane proton channel. CF(1) has five subunits: alpha(3), beta(3), gamma(1), delta(1), epsilon(1). CF(0) has three main subunits: a(1), b(2) and c(9-12). The alpha and beta chains form an alternating ring which encloses part of the gamma chain. CF(1) is attached to CF(0) by a central stalk formed by the gamma and epsilon chains, while a peripheral stalk is formed by the delta and b chains.

It localises to the cell membrane. Its function is as follows. Key component of the proton channel; it plays a direct role in the translocation of protons across the membrane. The chain is ATP synthase subunit a from Arthrobacter sp. (strain FB24).